The following is a 149-amino-acid chain: Pleckstrin homology domain-containing family J member 1 (149 aa).

Positions arginine 15–tyrosine 108 constitute a PH domain.

The sequence is that of Pleckstrin homology domain-containing family J member 1 (plekhj1) from Xenopus laevis (African clawed frog).